The chain runs to 307 residues: Porphobilinogen deaminase (307 aa).

An S-(dipyrrolylmethanemethyl)cysteine modification is found at cysteine 239.

Belongs to the HMBS family. Monomer. The cofactor is dipyrromethane.

It catalyses the reaction 4 porphobilinogen + H2O = hydroxymethylbilane + 4 NH4(+). Its pathway is porphyrin-containing compound metabolism; protoporphyrin-IX biosynthesis; coproporphyrinogen-III from 5-aminolevulinate: step 2/4. Tetrapolymerization of the monopyrrole PBG into the hydroxymethylbilane pre-uroporphyrinogen in several discrete steps. The sequence is that of Porphobilinogen deaminase (hemC) from Campylobacter jejuni subsp. jejuni serotype O:2 (strain ATCC 700819 / NCTC 11168).